Here is a 134-residue protein sequence, read N- to C-terminus: Retinoid-binding protein 7 (134 aa).

Belongs to the calycin superfamily. Fatty-acid binding protein (FABP) family. In terms of tissue distribution, expressed primarily in kidney, heart and transverse colon. Detected in adult lymph node, appendix, ascending colon, and in fetal heart and spleen.

It is found in the cytoplasm. Functionally, intracellular transport of retinol. The polypeptide is Retinoid-binding protein 7 (RBP7) (Homo sapiens (Human)).